The sequence spans 208 residues: Uracil phosphoribosyltransferase (208 aa).

5-phospho-alpha-D-ribose 1-diphosphate contacts are provided by residues Arg-77, Arg-102, and 129–137; that span reads DPMLATGNS. Residues Ile-193 and 198 to 200 each bind uracil; that span reads GDA. Asp-199 is a binding site for 5-phospho-alpha-D-ribose 1-diphosphate.

Belongs to the UPRTase family. Requires Mg(2+) as cofactor.

It catalyses the reaction UMP + diphosphate = 5-phospho-alpha-D-ribose 1-diphosphate + uracil. It participates in pyrimidine metabolism; UMP biosynthesis via salvage pathway; UMP from uracil: step 1/1. Allosterically activated by GTP. Catalyzes the conversion of uracil and 5-phospho-alpha-D-ribose 1-diphosphate (PRPP) to UMP and diphosphate. This chain is Uracil phosphoribosyltransferase, found in Mycoplasmopsis pulmonis (strain UAB CTIP) (Mycoplasma pulmonis).